The chain runs to 143 residues: Hemoglobin subunit alpha-2 (143 aa).

Ser2 carries the N-acetylserine modification. Residues 2-143 enclose the Globin domain; that stretch reads SLSTKDKDTV…LARALSEKYR (142 aa). His60 and His89 together coordinate heme b.

The protein belongs to the globin family. As to quaternary structure, hb 2 is a heterotetramer of two alpha-2 and two beta chains. In terms of tissue distribution, red blood cells.

In terms of biological role, involved in oxygen transport from gills to the various peripheral tissues. This Cottoperca gobio (Frogmouth) protein is Hemoglobin subunit alpha-2.